A 408-amino-acid polypeptide reads, in one-letter code: Aminoacylase-1 (408 aa).

His80 is a binding site for Zn(2+). Residue Asp82 is part of the active site. Asp113 lines the Zn(2+) pocket. Glu147 acts as the Proton acceptor in catalysis. Residues Glu148, Glu175, and His373 each contribute to the Zn(2+) site.

The protein belongs to the peptidase M20A family. Homodimer. Interacts with SPHK1. The cofactor is Zn(2+).

It is found in the cytoplasm. The enzyme catalyses an N-acyl-L-amino acid + H2O = an L-alpha-amino acid + a carboxylate. It catalyses the reaction N-acetyl-L-methionine + H2O = L-methionine + acetate. The catalysed reaction is N-acetyl-L-glutamine + H2O = L-glutamine + acetate. Catalyzes the hydrolysis of N-acetylated amino acids to acetate and free amino acids. The chain is Aminoacylase-1 (Acy1) from Mus musculus (Mouse).